The chain runs to 314 residues: MGAGDRTVAGMPRIGMGTAVQGPKPDPIRRAVLRAIEIGYRHFDTAAHYETEAPIGEAAAEAVRSGAVASRDDLFITSKLWCSDAHGDRVVPALRHTLRNLQMEYVDLYLVHWPVSMKPGRFKAPFTAEDFVPFDMRAVWEAMEECHRLGLAKAIGVANFSCKKLDTLLSFATIPPTVNQVEVNPVWQQRKLREFCRGKGIQLCAYSPLGAKGTHWGSDAVMDAGVLQDIAASRGKSVAQVCLRWVYEQGDCLIVKSFDEARMRENLDVDGWELTEEERRRIAEIPQRKINLGKRYVSDHGPYKSLEELWDGEI.

Residues 1-21 (MGAGDRTVAGMPRIGMGTAVQ) are disordered. NADP(+) is bound at residue Asp44. The active-site Proton donor is the Tyr49. His112 provides a ligand contact to substrate. Residues 158–159 (AN), Gln180, 258–266 (FDEARMREN), and 273–281 (ELTEEERRR) each bind NADP(+).

This sequence belongs to the aldo/keto reductase family.

The catalysed reaction is 2'-deoxymugineate + NAD(+) = 3''-deamino-3''-oxonicotianamine + NADH + H(+). The enzyme catalyses 2'-deoxymugineate + NADP(+) = 3''-deamino-3''-oxonicotianamine + NADPH + H(+). It functions in the pathway siderophore biosynthesis. Functionally, catalyzes the reduction of a 3''-keto intermediate during the biosynthesis of 2'-deoxymugineic acid (DMA) from L-Met. Involved in the formation of phytosiderophores (MAs) belonging to the mugineic acid family and required to acquire iron. This Hordeum vulgare (Barley) protein is Deoxymugineic acid synthase 1.